We begin with the raw amino-acid sequence, 279 residues long: Oxygen-dependent coproporphyrinogen-III oxidase (279 aa).

Serine 102 is a binding site for substrate. A divalent metal cation contacts are provided by histidine 106 and histidine 116. The active-site Proton donor is histidine 116. 118 to 120 contacts substrate; the sequence is NTR. A divalent metal cation contacts are provided by histidine 149 and histidine 179. The interval 244–279 is important for dimerization; it reads YVEFNLLYDRGTKFGLMTDGNIEAILMSLPPVVKFN.

This sequence belongs to the aerobic coproporphyrinogen-III oxidase family. As to quaternary structure, homodimer. Requires a divalent metal cation as cofactor.

The protein resides in the cytoplasm. The catalysed reaction is coproporphyrinogen III + O2 + 2 H(+) = protoporphyrinogen IX + 2 CO2 + 2 H2O. It functions in the pathway porphyrin-containing compound metabolism; protoporphyrin-IX biosynthesis; protoporphyrinogen-IX from coproporphyrinogen-III (O2 route): step 1/1. Involved in the heme biosynthesis. Catalyzes the aerobic oxidative decarboxylation of propionate groups of rings A and B of coproporphyrinogen-III to yield the vinyl groups in protoporphyrinogen-IX. The protein is Oxygen-dependent coproporphyrinogen-III oxidase of Rickettsia typhi (strain ATCC VR-144 / Wilmington).